Reading from the N-terminus, the 547-residue chain is Fumarate reductase (CoM/CoB) subunit A (547 aa).

Belongs to the FAD-dependent oxidoreductase 2 family. In terms of assembly, subunit A of the heterodimeric fumarate reductase of methanogenic Archaea, composed of subunits A (TfrA) and B (TfrB). An oxidized flavin serves as cofactor.

Its subcellular location is the cytoplasm. It catalyses the reaction coenzyme B + coenzyme M + fumarate = coenzyme M-coenzyme B heterodisulfide + succinate. In terms of biological role, catalyzes the reduction of fumarate with reduced coenzyme M (CoM-S-H) and coenzyme B (CoB-S-H). In vitro, is able to reduces fumarate with reduced benzyl viologen, oxidize CoM-S-H and CoB-S-H to CoM-S-S-CoB with methylene blue, and reduce CoM-S-S-CoB with reduced benzyl viologen. The enzyme has specificity for the two thiol compounds as the CoB--CoM heterodisulfide reductase. The enzyme is very sensitive to oxygen. This Methanothermobacter marburgensis (strain ATCC BAA-927 / DSM 2133 / JCM 14651 / NBRC 100331 / OCM 82 / Marburg) (Methanobacterium thermoautotrophicum) protein is Fumarate reductase (CoM/CoB) subunit A.